Here is a 127-residue protein sequence, read N- to C-terminus: Large ribosomal subunit protein eL8 (127 aa).

This sequence belongs to the eukaryotic ribosomal protein eL8 family. In terms of assembly, part of the 50S ribosomal subunit. Probably part of the RNase P complex.

The protein resides in the cytoplasm. Multifunctional RNA-binding protein that recognizes the K-turn motif in ribosomal RNA, the RNA component of RNase P, box H/ACA, box C/D and box C'/D' sRNAs. The chain is Large ribosomal subunit protein eL8 from Aeropyrum pernix (strain ATCC 700893 / DSM 11879 / JCM 9820 / NBRC 100138 / K1).